The sequence spans 98 residues: PqqA binding protein (98 aa).

It belongs to the PqqD family. As to quaternary structure, monomer. Interacts with PqqE.

It participates in cofactor biosynthesis; pyrroloquinoline quinone biosynthesis. Functions as a PqqA binding protein and presents PqqA to PqqE, in the pyrroloquinoline quinone (PQQ) biosynthetic pathway. The polypeptide is PqqA binding protein (Pseudomonas syringae pv. tomato (strain ATCC BAA-871 / DC3000)).